The chain runs to 385 residues: Acetylornithine deacetylase (385 aa).

Residue histidine 80 participates in Zn(2+) binding. Residue aspartate 82 is part of the active site. Position 112 (aspartate 112) interacts with Zn(2+). Residue glutamate 144 is the Proton acceptor of the active site. Residues glutamate 145, glutamate 169, and histidine 355 each contribute to the Zn(2+) site.

The protein belongs to the peptidase M20A family. ArgE subfamily. As to quaternary structure, homodimer. It depends on Zn(2+) as a cofactor. Requires Co(2+) as cofactor. The cofactor is glutathione.

Its subcellular location is the cytoplasm. The catalysed reaction is N(2)-acetyl-L-ornithine + H2O = L-ornithine + acetate. It functions in the pathway amino-acid biosynthesis; L-arginine biosynthesis; L-ornithine from N(2)-acetyl-L-ornithine (linear): step 1/1. Functionally, catalyzes the hydrolysis of the amide bond of N(2)-acetylated L-amino acids. Cleaves the acetyl group from N-acetyl-L-ornithine to form L-ornithine, an intermediate in L-arginine biosynthesis pathway, and a branchpoint in the synthesis of polyamines. The sequence is that of Acetylornithine deacetylase from Photorhabdus laumondii subsp. laumondii (strain DSM 15139 / CIP 105565 / TT01) (Photorhabdus luminescens subsp. laumondii).